We begin with the raw amino-acid sequence, 377 residues long: Flagellar P-ring protein (377 aa).

A signal peptide spans 1-33; sequence MRYPVSTGIAAPAWFAFFCAWAGLWTFSLPVQA.

Belongs to the FlgI family. The basal body constitutes a major portion of the flagellar organelle and consists of four rings (L,P,S, and M) mounted on a central rod.

The protein resides in the periplasm. It localises to the bacterial flagellum basal body. Its function is as follows. Assembles around the rod to form the L-ring and probably protects the motor/basal body from shearing forces during rotation. The protein is Flagellar P-ring protein of Nitrosospira multiformis (strain ATCC 25196 / NCIMB 11849 / C 71).